The chain runs to 144 residues: MELNTLAPAPGAKSSKKRVGRGIGSGLGKTGGRGHKGQKSRSGGSVKPGFEGGQMPIQRRLPKFGFTSRKAMVTAEVNLAEIAKVDGDTVELATLKAAGLVRKNVLHAKVIKSGELSRAVTVKGLKVTKGAREAIEAAGGKIEG.

Positions 1-56 are disordered; sequence MELNTLAPAPGAKSSKKRVGRGIGSGLGKTGGRGHKGQKSRSGGSVKPGFEGGQMP. The span at 21–31 shows a compositional bias: gly residues; sequence RGIGSGLGKTG.

Belongs to the universal ribosomal protein uL15 family. Part of the 50S ribosomal subunit.

In terms of biological role, binds to the 23S rRNA. This is Large ribosomal subunit protein uL15 from Idiomarina loihiensis (strain ATCC BAA-735 / DSM 15497 / L2-TR).